The chain runs to 378 residues: Glutamate 5-kinase (378 aa).

An ATP-binding site is contributed by K20. 3 residues coordinate substrate: S60, D147, and N159. Residues 179 to 180 and 221 to 227 contribute to the ATP site; these read TD and TGGMATK. In terms of domain architecture, PUA spans 286–364; that stretch reads AGDIVIDAGA…QEIYKVLGYE (79 aa).

This sequence belongs to the glutamate 5-kinase family.

It localises to the cytoplasm. The enzyme catalyses L-glutamate + ATP = L-glutamyl 5-phosphate + ADP. Its pathway is amino-acid biosynthesis; L-proline biosynthesis; L-glutamate 5-semialdehyde from L-glutamate: step 1/2. Functionally, catalyzes the transfer of a phosphate group to glutamate to form L-glutamate 5-phosphate. In Photobacterium profundum (strain SS9), this protein is Glutamate 5-kinase.